The chain runs to 161 residues: Cytochrome c-type biogenesis protein CcmE (161 aa).

The Cytoplasmic segment spans residues 1-8 (MNPRRKKR). A helical; Signal-anchor for type II membrane protein membrane pass occupies residues 9-29 (LGLILALFVGISATVGLMLYA). Residues 30–161 (LNQNMDLFYT…TEQQKQGTGQ (132 aa)) lie on the Periplasmic side of the membrane. Heme-binding residues include H129 and Y133. Positions 142 to 161 (MKKTHEPLQYTEQQKQGTGQ) are disordered. Over residues 151–161 (YTEQQKQGTGQ) the composition is skewed to polar residues.

It belongs to the CcmE/CycJ family.

The protein resides in the cell inner membrane. Functionally, heme chaperone required for the biogenesis of c-type cytochromes. Transiently binds heme delivered by CcmC and transfers the heme to apo-cytochromes in a process facilitated by CcmF and CcmH. The sequence is that of Cytochrome c-type biogenesis protein CcmE from Aliivibrio fischeri (strain MJ11) (Vibrio fischeri).